The sequence spans 166 residues: Phosphopantetheine adenylyltransferase (166 aa).

A substrate-binding site is contributed by Ser-8. ATP-binding positions include Ser-8–Phe-9 and His-16. 3 residues coordinate substrate: Lys-40, Thr-72, and Arg-86. ATP is bound by residues Gly-87–Arg-89, Glu-97, and Tyr-122–Ser-128.

It belongs to the bacterial CoaD family. As to quaternary structure, homohexamer. The cofactor is Mg(2+).

Its subcellular location is the cytoplasm. The enzyme catalyses (R)-4'-phosphopantetheine + ATP + H(+) = 3'-dephospho-CoA + diphosphate. It functions in the pathway cofactor biosynthesis; coenzyme A biosynthesis; CoA from (R)-pantothenate: step 4/5. In terms of biological role, reversibly transfers an adenylyl group from ATP to 4'-phosphopantetheine, yielding dephospho-CoA (dPCoA) and pyrophosphate. In Synechococcus elongatus (strain ATCC 33912 / PCC 7942 / FACHB-805) (Anacystis nidulans R2), this protein is Phosphopantetheine adenylyltransferase.